Consider the following 543-residue polypeptide: Bifunctional purine biosynthesis protein PurH (543 aa).

One can recognise an MGS-like domain in the interval 5–151 (NHARPIRRAL…KNHKDVTIVV (147 aa)).

The protein belongs to the PurH family.

The enzyme catalyses (6R)-10-formyltetrahydrofolate + 5-amino-1-(5-phospho-beta-D-ribosyl)imidazole-4-carboxamide = 5-formamido-1-(5-phospho-D-ribosyl)imidazole-4-carboxamide + (6S)-5,6,7,8-tetrahydrofolate. It carries out the reaction IMP + H2O = 5-formamido-1-(5-phospho-D-ribosyl)imidazole-4-carboxamide. It functions in the pathway purine metabolism; IMP biosynthesis via de novo pathway; 5-formamido-1-(5-phospho-D-ribosyl)imidazole-4-carboxamide from 5-amino-1-(5-phospho-D-ribosyl)imidazole-4-carboxamide (10-formyl THF route): step 1/1. The protein operates within purine metabolism; IMP biosynthesis via de novo pathway; IMP from 5-formamido-1-(5-phospho-D-ribosyl)imidazole-4-carboxamide: step 1/1. The chain is Bifunctional purine biosynthesis protein PurH from Shewanella oneidensis (strain ATCC 700550 / JCM 31522 / CIP 106686 / LMG 19005 / NCIMB 14063 / MR-1).